The sequence spans 359 residues: S-adenosylmethionine-dependent nucleotide dehydratase RSAD2 (359 aa).

Positions 43-67 (QTPARKISRPESRTSKQKEGSRAPF) are disordered. The span at 50 to 63 (SRPESRTSKQKEGS) shows a compositional bias: basic and acidic residues. In terms of domain architecture, Radical SAM core spans 67 to 287 (FTTPSSVNYH…LERHQSIQCL (221 aa)). [4Fe-4S] cluster is bound by residues Cys-81, Cys-85, and Cys-88.

The protein belongs to the radical SAM superfamily. RSAD2 family. The cofactor is [4Fe-4S] cluster.

Its subcellular location is the endoplasmic reticulum membrane. Interferon-inducible iron-sulfur (4FE-4S) cluster-binding antiviral protein which plays a major role in the cell antiviral state induced by type I and type II interferon. This Danio rerio (Zebrafish) protein is S-adenosylmethionine-dependent nucleotide dehydratase RSAD2.